A 272-amino-acid polypeptide reads, in one-letter code: uncharacterized protein (272 aa).

The next 4 helical transmembrane spans lie at 9–29 (PVGF…GSGV), 38–58 (LTSF…SFPP), 154–174 (AGEF…VLML), and 188–208 (AIAL…FNPI). At 209–272 (AAKLEEKTES…KTKKGSVHEA (64 aa)) the chain is on the cytoplasmic side.

Belongs to the MotA family.

The protein resides in the cell membrane. Functionally, may be involved in some transport function. This is an uncharacterized protein from Bacillus subtilis (strain 168).